An 853-amino-acid polypeptide reads, in one-letter code: DNA mismatch repair protein MutS (853 aa).

614–621 contacts ATP; the sequence is GPNMGGKS.

This sequence belongs to the DNA mismatch repair MutS family.

This protein is involved in the repair of mismatches in DNA. It is possible that it carries out the mismatch recognition step. This protein has a weak ATPase activity. This chain is DNA mismatch repair protein MutS, found in Cronobacter sakazakii (strain ATCC BAA-894) (Enterobacter sakazakii).